The following is a 185-amino-acid chain: Photosystem I assembly protein Ycf4 (185 aa).

Helical transmembrane passes span asparagine 21 to tyrosine 43 and phenylalanine 68 to serine 90.

It belongs to the Ycf4 family.

It localises to the plastid. It is found in the chloroplast thylakoid membrane. Seems to be required for the assembly of the photosystem I complex. In Aegilops tauschii (Tausch's goatgrass), this protein is Photosystem I assembly protein Ycf4.